The sequence spans 235 residues: Phosphoribosylaminoimidazole-succinocarboxamide synthase (235 aa).

It belongs to the SAICAR synthetase family.

It carries out the reaction 5-amino-1-(5-phospho-D-ribosyl)imidazole-4-carboxylate + L-aspartate + ATP = (2S)-2-[5-amino-1-(5-phospho-beta-D-ribosyl)imidazole-4-carboxamido]succinate + ADP + phosphate + 2 H(+). The protein operates within purine metabolism; IMP biosynthesis via de novo pathway; 5-amino-1-(5-phospho-D-ribosyl)imidazole-4-carboxamide from 5-amino-1-(5-phospho-D-ribosyl)imidazole-4-carboxylate: step 1/2. In Streptococcus gordonii (strain Challis / ATCC 35105 / BCRC 15272 / CH1 / DL1 / V288), this protein is Phosphoribosylaminoimidazole-succinocarboxamide synthase.